The following is a 379-amino-acid chain: MRVLGLMSGTSADGVDAVLAEFSGSPSEPKWSLLNLVCIPYPEDLRQTVVNAGQGIKLNSCEWLELSESITEVHAQAALACDPRAQAELVGSHGQTVWHRPPQKNHRGASWQILQAPLLAELLKRPVVHDFRAADLALGGQGAPLVPMADAALLGRVGGWRGVLNLGGIANLTLIPPRSGPDRLASVMGWDCGPANSLIDLAVEQISKGKLAFDHDGIIAASGHPHTTTIERWLKETFFQLPPPKSTGREQFGLADLEQRLKELPKMSRANRVATLTAFSAAVVAQDLDNLHLRNLVRPLELIVAGGGSRNPVLMNELRQRCRGMRLLNSDELGLSAEAREGLAFALLAWWHCLQYPGNAPAITGAKRAAVLGVRADPA.

An ATP-binding site is contributed by 9–16 (GTSADGVD).

Belongs to the anhydro-N-acetylmuramic acid kinase family.

It carries out the reaction 1,6-anhydro-N-acetyl-beta-muramate + ATP + H2O = N-acetyl-D-muramate 6-phosphate + ADP + H(+). It participates in amino-sugar metabolism; 1,6-anhydro-N-acetylmuramate degradation. Its pathway is cell wall biogenesis; peptidoglycan recycling. Catalyzes the specific phosphorylation of 1,6-anhydro-N-acetylmuramic acid (anhMurNAc) with the simultaneous cleavage of the 1,6-anhydro ring, generating MurNAc-6-P. Is required for the utilization of anhMurNAc either imported from the medium or derived from its own cell wall murein, and thus plays a role in cell wall recycling. The polypeptide is Anhydro-N-acetylmuramic acid kinase (Prochlorococcus marinus (strain MIT 9313)).